Here is a 480-residue protein sequence, read N- to C-terminus: Cobyric acid synthase (480 aa).

The region spanning 246 to 434 (KILIAVPILP…VHGLFSELAQ (189 aa)) is the GATase cobBQ-type domain. The Nucleophile role is filled by Cys-328. His-426 is a catalytic residue.

It belongs to the CobB/CobQ family. CobQ subfamily.

The protein operates within cofactor biosynthesis; adenosylcobalamin biosynthesis. Functionally, catalyzes amidations at positions B, D, E, and G on adenosylcobyrinic A,C-diamide. NH(2) groups are provided by glutamine, and one molecule of ATP is hydrogenolyzed for each amidation. The sequence is that of Cobyric acid synthase from Methylocella silvestris (strain DSM 15510 / CIP 108128 / LMG 27833 / NCIMB 13906 / BL2).